The sequence spans 597 residues: Arginine--tRNA ligase (597 aa).

The 'HIGH' region signature appears at 124–134 (PNVAKPLHVGH).

The protein belongs to the class-I aminoacyl-tRNA synthetase family. As to quaternary structure, monomer.

The protein localises to the cytoplasm. It carries out the reaction tRNA(Arg) + L-arginine + ATP = L-arginyl-tRNA(Arg) + AMP + diphosphate. This Agathobacter rectalis (strain ATCC 33656 / DSM 3377 / JCM 17463 / KCTC 5835 / VPI 0990) (Eubacterium rectale) protein is Arginine--tRNA ligase.